The sequence spans 416 residues: Probable glucan 1,3-beta-glucosidase A (416 aa).

The first 22 residues, 1–22 (MIFKFSQKALVALYLVVGLAEA), serve as a signal peptide directing secretion. The Proton donor role is filled by Glu-211. Cystine bridges form between Cys-291–Cys-415 and Cys-316–Cys-342. Glu-308 functions as the Nucleophile in the catalytic mechanism. The N-linked (GlcNAc...) asparagine glycan is linked to Asn-344.

It belongs to the glycosyl hydrolase 5 (cellulase A) family. In terms of assembly, monomer. It depends on Mn(2+) as a cofactor.

The protein localises to the secreted. The catalysed reaction is Successive hydrolysis of beta-D-glucose units from the non-reducing ends of (1-&gt;3)-beta-D-glucans, releasing alpha-glucose.. Functionally, beta-glucanases participate in the metabolism of beta-glucan, the main structural component of the cell wall. It could also function biosynthetically as a transglycosylase. The polypeptide is Probable glucan 1,3-beta-glucosidase A (exgA) (Aspergillus fumigatus (strain CBS 144.89 / FGSC A1163 / CEA10) (Neosartorya fumigata)).